We begin with the raw amino-acid sequence, 398 residues long: RNA-binding protein rnc1 (398 aa).

The disordered stretch occupies residues 40–78 (KVSIPTPKPSTPLSTLTNGSTIQQSMTNQPEPTSQVPPI). A Phosphothreonine modification is found at Thr-50. Positions 57–76 (NGSTIQQSMTNQPEPTSQVP) are enriched in polar residues. KH domains lie at 93-157 (QLTL…YRFI) and 178-243 (PRKL…IWEI). Residues 274–290 (ASTASPQQVSPPAAPST) show a composition bias toward low complexity. The segment at 274–295 (ASTASPQQVSPPAAPSTTSGEA) is disordered. The KH 3 domain occupies 320-385 (KVTQNISIPA…EENEKALFLL (66 aa)).

In terms of processing, phosphorylated by pmk1. Phosphorylation causes enhancement of the RNA-binding activity.

It localises to the cytoplasm. Functionally, binds and stabilizes pmp1 mRNA and hence acts as a negative regulator of pmk1 signaling. Overexpression suppresses the Cl(-) sensitivity of calcineurin deletion. This Schizosaccharomyces pombe (strain 972 / ATCC 24843) (Fission yeast) protein is RNA-binding protein rnc1.